The chain runs to 111 residues: UPF0122 protein YofM (111 aa).

It belongs to the UPF0122 family.

Its function is as follows. Might take part in the signal recognition particle (SRP) pathway. This is inferred from the conservation of its genetic proximity to ftsY/ffh. May be a regulatory protein. This Lactococcus lactis subsp. lactis (strain IL1403) (Streptococcus lactis) protein is UPF0122 protein YofM (yofM).